The chain runs to 299 residues: CCR4-NOT transcription complex subunit 9 (299 aa).

Met-1 is modified (N-acetylmethionine).

The protein belongs to the CNOT9 family. In terms of assembly, homodimer. Component of the CCR4-NOT complex; distinct complexes seem to exist that differ in the participation of probably mutually exclusive catalytic subunits. Interacts with MYB, ATF2, RARA, RARB, RARG, RXRA, RXRB and RXRG. Identified in a complex with ATF2 bound to target DNA. Interacts with NANOS2. Directly interacts with ZNF335. Detected in spleen, thymus, prostate, testis, ovary and intestine.

Its subcellular location is the nucleus. It is found in the cytoplasm. The protein localises to the P-body. Its function is as follows. Component of the CCR4-NOT complex which is one of the major cellular mRNA deadenylases and is linked to various cellular processes including bulk mRNA degradation, miRNA-mediated repression, translational repression during translational initiation and general transcription regulation. Additional complex functions may be a consequence of its influence on mRNA expression. Involved in down-regulation of MYB- and JUN-dependent transcription. May play a role in cell differentiation. Can bind oligonucleotides, such as poly-G, poly-C or poly-T (in vitro), but the physiological relevance of this is not certain. Does not bind poly-A. Enhances ligand-dependent transcriptional activity of nuclear hormone receptors, including RARA, expect ESR1-mediated transcription that is not only slightly increased, if at all. The chain is CCR4-NOT transcription complex subunit 9 from Homo sapiens (Human).